The following is a 149-amino-acid chain: Nucleoside diphosphate kinase (149 aa).

ATP is bound by residues Lys-9, Phe-57, Arg-85, Thr-91, Arg-102, and Asn-112. The active-site Pros-phosphohistidine intermediate is His-115.

It belongs to the NDK family. Homotetramer. Requires Mg(2+) as cofactor.

Its subcellular location is the cytoplasm. It carries out the reaction a 2'-deoxyribonucleoside 5'-diphosphate + ATP = a 2'-deoxyribonucleoside 5'-triphosphate + ADP. The catalysed reaction is a ribonucleoside 5'-diphosphate + ATP = a ribonucleoside 5'-triphosphate + ADP. Functionally, major role in the synthesis of nucleoside triphosphates other than ATP. The ATP gamma phosphate is transferred to the NDP beta phosphate via a ping-pong mechanism, using a phosphorylated active-site intermediate. This chain is Nucleoside diphosphate kinase, found in Cyanothece sp. (strain PCC 7425 / ATCC 29141).